We begin with the raw amino-acid sequence, 228 residues long: 5'-methylthioadenosine/S-adenosylhomocysteine nucleosidase (228 aa).

The active-site Proton acceptor is the E11. Substrate is bound by residues G77, I151, and 172–173; that span reads ME. Residue D196 is the Proton donor of the active site.

Belongs to the PNP/UDP phosphorylase family. MtnN subfamily.

The enzyme catalyses S-adenosyl-L-homocysteine + H2O = S-(5-deoxy-D-ribos-5-yl)-L-homocysteine + adenine. The catalysed reaction is S-methyl-5'-thioadenosine + H2O = 5-(methylsulfanyl)-D-ribose + adenine. It catalyses the reaction 5'-deoxyadenosine + H2O = 5-deoxy-D-ribose + adenine. Its pathway is amino-acid biosynthesis; L-methionine biosynthesis via salvage pathway; S-methyl-5-thio-alpha-D-ribose 1-phosphate from S-methyl-5'-thioadenosine (hydrolase route): step 1/2. In terms of biological role, catalyzes the irreversible cleavage of the glycosidic bond in both 5'-methylthioadenosine (MTA) and S-adenosylhomocysteine (SAH/AdoHcy) to adenine and the corresponding thioribose, 5'-methylthioribose and S-ribosylhomocysteine, respectively. Also cleaves 5'-deoxyadenosine, a toxic by-product of radical S-adenosylmethionine (SAM) enzymes, into 5-deoxyribose and adenine. This chain is 5'-methylthioadenosine/S-adenosylhomocysteine nucleosidase, found in Staphylococcus saprophyticus subsp. saprophyticus (strain ATCC 15305 / DSM 20229 / NCIMB 8711 / NCTC 7292 / S-41).